The chain runs to 307 residues: Mitochondrial glycine transporter YMC1 (307 aa).

Solcar repeat units follow at residues 26–106 (VKDL…MKRF), 121–204 (PQYY…LIAN), and 218–305 (PAWK…AMRL). Helical transmembrane passes span 29-49 (LLAGTAGGIAQVLVGQPFDTT), 83-103 (LTPLIGVGACVSLQFGVNEAM), 118-138 (LSLPQYYACGVTGGIVNSFLA), 183-203 (TILREGHGCGTYFLVYEALIA), 223-243 (CIFGALSGTALWLMVYPLDVI), and 277-298 (FFKGFGPTMLRAAPANGATFAT).

The protein belongs to the mitochondrial carrier (TC 2.A.29) family.

The protein localises to the mitochondrion inner membrane. Its function is as follows. Secondary mitochondrial glycine transporter required for the biosynthesis of heme at high glycine concentrations. Imports the precursor glycine into the mitochondrial matrix, where it is condensed with succinyl-CoA to produce 5-aminolevulinate (ALA), the first step of heme biosynthesis. This chain is Mitochondrial glycine transporter YMC1, found in Saccharomyces cerevisiae (strain ATCC 204508 / S288c) (Baker's yeast).